The following is a 949-amino-acid chain: Bifunctional uridylyltransferase/uridylyl-removing enzyme (949 aa).

Positions 1–377 are uridylyltransferase; the sequence is MARHETSFPE…RFRNRVRKIA (377 aa). Residues 378–733 are uridylyl-removing; the sequence is GTLDFVDDGG…VRTHDFHAIT (356 aa). The 117-residue stretch at 494–610 folds into the HD domain; the sequence is VDEHLLRSVD…VDFAERVQSL (117 aa). ACT domains lie at 734 to 816 and 845 to 926; these read EITV…VIAS and VIEV…ERMP. A disordered region spans residues 926-949; the sequence is PSGIIAPTPVSRVPHGSKTTKAET.

It belongs to the GlnD family. Mg(2+) is required as a cofactor.

The catalysed reaction is [protein-PII]-L-tyrosine + UTP = [protein-PII]-uridylyl-L-tyrosine + diphosphate. It catalyses the reaction [protein-PII]-uridylyl-L-tyrosine + H2O = [protein-PII]-L-tyrosine + UMP + H(+). Uridylyltransferase (UTase) activity is inhibited by glutamine, while glutamine activates uridylyl-removing (UR) activity. Its function is as follows. Modifies, by uridylylation and deuridylylation, the PII regulatory proteins (GlnB and homologs), in response to the nitrogen status of the cell that GlnD senses through the glutamine level. Under low glutamine levels, catalyzes the conversion of the PII proteins and UTP to PII-UMP and PPi, while under higher glutamine levels, GlnD hydrolyzes PII-UMP to PII and UMP (deuridylylation). Thus, controls uridylylation state and activity of the PII proteins, and plays an important role in the regulation of nitrogen fixation and metabolism. The chain is Bifunctional uridylyltransferase/uridylyl-removing enzyme from Rhizobium meliloti (strain 1021) (Ensifer meliloti).